A 527-amino-acid chain; its full sequence is MSLCGARANAKMMAAYNGGTSAAAAGHHHHHHHHLPHLPPPHLHHHHHPQHHLHPGSAAAVHPVQQHTSSAAAAAAAAAAAAAMLNPGQQQPYFPSPAPGQAPGPAAAAPAQVQAAAAATVKAHHHQHSHHPQQQLDIEPDRPIGYGAFGVVWSVTDPRDGKRVALKKMPNVFQNLVSCKRVFRELKMLCFFKHDNVLSALDILQPPHIDYFEEIYVVTELMQSDLHKIIVSPQPLSSDHVKVFLYQILRGLKYLHSAGILHRDIKPGNLLVNSNCVLKICDFGLARVEELDESRHMTQEVVTQYYRAPEILMGSRHYSNAIDIWSVGCIFAELLGRRILFQAQSPIQQLDLITDLLGTPSLEAMRTACEGAKAHILRGPHKQPSLPVLYTLSSQATHEAVHLLCRMLVFDPSKRISAKDALAHPYLDEGRLRYHTCMCKCCFSTSTGRVYTSDFEPITNPKFDDTFEKNLSSVRQVKEIIHQFILEQQKGNRVPLCINPQSAAFKSFISSTVAQPSEMPPSPLVWE.

Sufficient for interaction with DAPK3 regions lie at residues 1–125 and 124–416; these read MSLC…KAHH and HHHQ…SKRI. Required for interaction with TAB2 regions lie at residues 1–304 and 434–527; these read MSLC…VVTQ and YHTC…LVWE. Disordered regions lie at residues 22 to 72 and 90 to 140; these read AAAA…SSAA and QQPY…DIEP. Over residues 26–54 the composition is skewed to basic residues; the sequence is GHHHHHHHHLPHLPPPHLHHHHHPQHHLH. Residues 103-119 are compositionally biased toward low complexity; it reads PGPAAAAPAQVQAAAAA. Over residues 122–131 the composition is skewed to basic residues; sequence KAHHHQHSHH. Residues 138–427 form the Protein kinase domain; sequence IEPDRPIGYG…AKDALAHPYL (290 aa). Residues 144-152 and lysine 167 each bind ATP; that span reads IGYGAFGVV. The Proton acceptor role is filled by aspartate 264. Threonine 298 bears the Phosphothreonine; by autocatalysis mark. A TQE motif is present at residues 298–300; it reads TQE. Residues 428 to 527 form a required for homodimerization and kinase activation and localization to the nucleus region; sequence DEGRLRYHTC…EMPPSPLVWE (100 aa). Serine 522 carries the post-translational modification Phosphoserine.

This sequence belongs to the protein kinase superfamily. CMGC Ser/Thr protein kinase family. MAP kinase subfamily. Homodimer. Homodimerization is required for intermolecular autophosphorylation, kinase activation and nuclear localization. May interact with components of cullin-RING-based SCF (SKP1-CUL1-F-box protein) E3 ubiquitin-protein ligase complexes. Interacts with LEF1, MEF2A, MYBL1 and MYBL2. Interacts with the upstream activating kinases HIPK2 and MAP3K7/TAK1. Interaction with MAP3K7/TAK1 seems to be indirect, and may be mediated by other proteins such as STAT3, TAB1 and TAB2. Interacts with and phosphorylates a number of transcription factors including FOXO1, FOXO3, FOXO4, MYB, NOTCH1 and TCF7L2/TCF4. Interacts with DAPK3/ZIPK, and this interaction may disrupt interaction with transcription factors such as TCF7L2/TCF4. Forms a transcriptional repressor complex with CHD7, PPARG and SETDB1. Interacts with RNF138/NARF. Interacts with ATF5; the interaction stabilizes ATF5 at the protein level in a kinase-independent manner. The cofactor is Mg(2+). Post-translationally, phosphorylated on Thr-298. Intermolecular autophosphorylation on Thr-298 activates the enzyme.

The protein localises to the nucleus. It localises to the cytoplasm. It catalyses the reaction L-seryl-[protein] + ATP = O-phospho-L-seryl-[protein] + ADP + H(+). The enzyme catalyses L-threonyl-[protein] + ATP = O-phospho-L-threonyl-[protein] + ADP + H(+). Activated by the non-canonical Wnt signaling pathway, in which WNT5A leads to activation of MAP3K7/TAK1 and HIPK2, which subsequently phosphorylates and activates this protein. Activated by dimerization and subsequent intermolecular autophosphorylation on Thr-298. Other cytokines such as IL6 may also activate this regulatory circuit. Its function is as follows. Serine/threonine-protein kinase that regulates a number of transcription factors with key roles in cell fate determination. Positive effector of the non-canonical Wnt signaling pathway, acting downstream of WNT5A, MAP3K7/TAK1 and HIPK2. Negative regulator of the canonical Wnt/beta-catenin signaling pathway. Binds to and phosphorylates TCF7L2/TCF4 and LEF1, promoting the dissociation of the TCF7L2/LEF1/beta-catenin complex from DNA, as well as the ubiquitination and subsequent proteolysis of LEF1. Together these effects inhibit the transcriptional activation of canonical Wnt/beta-catenin target genes. Negative regulator of the Notch signaling pathway. Binds to and phosphorylates NOTCH1, thereby preventing the formation of a transcriptionally active ternary complex of NOTCH1, RBPJ/RBPSUH and MAML1. Negative regulator of the MYB family of transcription factors. Phosphorylation of MYB leads to its subsequent proteolysis while phosphorylation of MYBL1 and MYBL2 inhibits their interaction with the coactivator CREBBP. Other transcription factors may also be inhibited by direct phosphorylation of CREBBP itself. Acts downstream of IL6 and MAP3K7/TAK1 to phosphorylate STAT3, which is in turn required for activation of NLK by MAP3K7/TAK1. Upon IL1B stimulus, cooperates with ATF5 to activate the transactivation activity of C/EBP subfamily members. Phosphorylates ATF5 but also stabilizes ATF5 protein levels in a kinase-independent manner. Acts as an inhibitor of the mTORC1 complex in response to osmotic stress by mediating phosphorylation of RPTOR, thereby preventing recruitment of the mTORC1 complex to lysosomes. The protein is Serine/threonine-protein kinase NLK (NLK) of Canis lupus familiaris (Dog).